A 90-amino-acid polypeptide reads, in one-letter code: Small ribosomal subunit protein uS15c (90 aa).

This sequence belongs to the universal ribosomal protein uS15 family. As to quaternary structure, part of the 30S ribosomal subunit.

It localises to the plastid. It is found in the chloroplast. This Oryza nivara (Indian wild rice) protein is Small ribosomal subunit protein uS15c (rps15-A).